The following is a 610-amino-acid chain: Menin (610 aa).

The tract at residues 214–390 (GVAERSWLYL…SLLEAGEERP (177 aa)) is interaction with FANCD2. Residues 462–552 (AEAAEAEELW…SPPPEGPVLT (91 aa)) are disordered. Residues 484-500 (RRESKPEEPPPPKKPAL) are compositionally biased toward basic and acidic residues. S487 and S543 each carry phosphoserine. Residues 537–548 (APAPAASPPPEG) are compositionally biased toward pro residues. T594 bears the Phosphothreonine mark.

In terms of assembly, component of the MLL-HCF complex, at least composed of KMT2A/MLL1, MEN1, ASH2L, RBBP5, DPY30, WDR5, HCFC1 and HCFC2. Component of the menin-associated histone methyltransferase complex, at least composed of KMT2B/MLL4, MEN1, ASH2L, RBBP5, DPY30 and WDR5. Interacts with POLR2B. Interacts with POLR2A phosphorylated at 'Ser-5', but not with the unphosphorylated, nor 'Ser-2' phosphorylated POLR2A forms. Interacts with FANCD2 and DBF4. Interacts with SMAD3, but not with SMAD2, nor SMAD4. Directly interacts with NFKB1, NFKB2 and RELA. Interacts with JUND (via MBM motif); inhibits the interaction of JUND with MAPK10 and the phosphorylation of JUND by MAP kinases MAPK8 and MAPK10. Interacts with KMT2A (via MBM motif). The KMT2A-MEN1 complex interacts with PSIP1 with a greater affinity as MEN1 enhances interaction of KMT2A with PSIP1.

It localises to the nucleus. Functionally, essential component of a MLL/SET1 histone methyltransferase (HMT) complex, a complex that specifically methylates 'Lys-4' of histone H3 (H3K4). Functions as a transcriptional regulator. Binds to the TERT promoter and represses telomerase expression. Plays a role in TGFB1-mediated inhibition of cell-proliferation, possibly regulating SMAD3 transcriptional activity. Represses JUND-mediated transcriptional activation on AP1 sites, as well as that mediated by NFKB subunit RELA. Positively regulates HOXC8 and HOXC6 gene expression. May be involved in normal hematopoiesis through the activation of HOXA9 expression. May be involved in DNA repair. In Canis lupus familiaris (Dog), this protein is Menin (MEN1).